Here is a 130-residue protein sequence, read N- to C-terminus: uncharacterized protein (130 aa).

This is an uncharacterized protein from Saccharomyces cerevisiae (strain ATCC 204508 / S288c) (Baker's yeast).